The chain runs to 215 residues: Adenylate kinase (215 aa).

Gly10–Thr15 is a binding site for ATP. The NMP stretch occupies residues Ser30–Val59. AMP contacts are provided by residues Thr31, Arg36, Leu57–Val59, and Gln91. Positions Gly120–Asp157 are LID. Residue Arg121 participates in ATP binding. Cys124 and Cys127 together coordinate Zn(2+). An ATP-binding site is contributed by Ile130–Tyr131. Zn(2+) is bound by residues Cys144 and Asp147. AMP-binding residues include Arg154 and Arg165.

It belongs to the adenylate kinase family. Monomer.

The protein localises to the cytoplasm. The catalysed reaction is AMP + ATP = 2 ADP. It participates in purine metabolism; AMP biosynthesis via salvage pathway; AMP from ADP: step 1/1. Its function is as follows. Catalyzes the reversible transfer of the terminal phosphate group between ATP and AMP. Plays an important role in cellular energy homeostasis and in adenine nucleotide metabolism. The protein is Adenylate kinase of Malacoplasma penetrans (strain HF-2) (Mycoplasma penetrans).